The chain runs to 935 residues: Protein translocase subunit SecA (935 aa).

ATP is bound by residues Gln-90, Gly-108–Thr-112, and Asp-504. The interval Gly-543–Phe-568 is disordered.

The protein belongs to the SecA family. Monomer and homodimer. Part of the essential Sec protein translocation apparatus which comprises SecA, SecYEG and auxiliary proteins SecDF. Other proteins may also be involved.

Its subcellular location is the cell inner membrane. It localises to the cellular thylakoid membrane. It is found in the cytoplasm. It catalyses the reaction ATP + H2O + cellular proteinSide 1 = ADP + phosphate + cellular proteinSide 2.. Functionally, part of the Sec protein translocase complex. Interacts with the SecYEG preprotein conducting channel. Has a central role in coupling the hydrolysis of ATP to the transfer of proteins into and across the cell membrane, serving as an ATP-driven molecular motor driving the stepwise translocation of polypeptide chains across the membrane. Its function is as follows. Probably participates in protein translocation into and across both the cytoplasmic and thylakoid membranes in cyanobacterial cells. The protein is Protein translocase subunit SecA of Rippkaea orientalis (strain PCC 8801 / RF-1) (Cyanothece sp. (strain PCC 8801)).